The following is a 505-amino-acid chain: Neuronal acetylcholine receptor subunit alpha-3 (505 aa).

The signal sequence occupies residues 1–31 (MGSGPLSLPLALSPPRLLLLLLLSLLPVARA). The Extracellular segment spans residues 32–250 (SEAEHRLFER…PLFYTINLII (219 aa)). Asparagine 55 and asparagine 172 each carry an N-linked (GlcNAc...) asparagine glycan. 2 disulfide bridges follow: cysteine 159–cysteine 173 and cysteine 223–cysteine 224. Residues 251 to 266 (PCLLISFLTVLVFYLP) traverse the membrane as a helical segment. Residues 267–268 (SD) are Cytoplasmic-facing. A helical transmembrane segment spans residues 269 to 285 (CGEKVTLCISVLLSLTV). At 286–307 (FLLVITETIPSTSLVIPLIGEY) the chain is on the extracellular side. The helical transmembrane segment at 308–326 (LLFTMIFVTLSIVITVFVL) threads the bilayer. At 327 to 474 (NVHYRTPTTH…QDDWKYVAMV (148 aa)) the chain is on the cytoplasmic side. Phosphoserine occurs at positions 413 and 416. A helical membrane pass occupies residues 475 to 493 (IDRIFLWVFTLVCILGTAG). The Extracellular segment spans residues 494-505 (LFLQPLMAREDA).

Belongs to the ligand-gated ion channel (TC 1.A.9) family. Acetylcholine receptor (TC 1.A.9.1) subfamily. Alpha-3/CHRNA3 sub-subfamily. As to quaternary structure, neuronal AChR is composed of two different types of subunits: alpha and beta. CHRNA3/Alpha-3 subunit can be combined to CHRNA5/alpha-5, CHRNB2/beta-2 CHRNB3/beta-3 or CHRNB4/beta-4 to give rise to functional receptors. Forms stoichiometries such as (CHRNA3)2:(CHRNB4)3 or (CHRNA3:CHRNB4)2:CHRNB3. Part of a complex composed of STUB1/CHIP, VCP/p97, CHRNA3, and UBXN2A that modulates the ubiquitination and endoplasmic reticulum-associated degradation (ERAD) of CHRNA3. Within the complex UBXN2A acts as a scaffold protein required for the interaction of CHRNA3 with VCP/p97, this interaction also inhibits CHRNA3 ubiquitination by STUB1/CHIP and subsequently ERAD. Interacts with UBXN2A (via SEP domain), the interaction is required for the interaction of CHRNA3 in the STUB1:VCP:UBXN2A complex. Interacts with RIC3; which is required for proper folding and assembly. Interacts with LYPD6. Ubiquitinated; by STUB1/CHIP and thereafter degraded by the 26S proteosome complex.

The protein resides in the synaptic cell membrane. The protein localises to the cell membrane. It localises to the endoplasmic reticulum. It is found in the golgi apparatus. It carries out the reaction Ca(2+)(in) = Ca(2+)(out). The catalysed reaction is K(+)(in) = K(+)(out). It catalyses the reaction Na(+)(in) = Na(+)(out). Activated by a myriad of ligands such as acetylcholine, cytisine, nicotine, choline and epibatidine. The heteropentamer CHRNA3:CHRNB2 activity is blocked by alpha-conotoxins ImI, ImII, PnIA, GID and MII. The heteropentamer CHRNA3:CHRNB4 activity is blocked by the alpha-conotoxin ImI and AuIB. Component of neuronal acetylcholine receptors (nAChRs) that function as pentameric, ligand-gated cation channels with high calcium permeability among other activities. nAChRs are excitatory neurotrasnmitter receptors formed by a collection of nAChR subunits known to mediate synaptic transmission in the nervous system and the neuromuscular junction. Each nAchR subunit confers differential attributes to channel properties, including activation, deactivation and desensitization kinetics, pH sensitivity, cation permeability, and binding to allosteric modulators. CHRNA3 forms heteropentameric neuronal acetylcholine receptors with CHRNB2 and CHRNB4, with CHRNA5, and CHRNB3 as accesory subunits. CHRNA3:CHRNB4 being predominant in neurons of the autonomic ganglia, it is known as ganglionic nicotinic receptor. CHRNA3:CHRNB4 or CHRNA3:CHRNA5:CHRNB4 play also an important role in the habenulo-interpeduncular tract, modulating the mesolimbic dopamine system and affecting reward circuits and addiction. Hypothalamic CHRNA3:CHRNB4 nAChR activation by nicotine leads to activation of POMC neurons and a decrease in food intake. Also expressed in the urothelium where it modulates reflex bladder activity by increasing intracellular calcium through extracellular influx and basal ATP release. In Homo sapiens (Human), this protein is Neuronal acetylcholine receptor subunit alpha-3.